The primary structure comprises 209 residues: Glutathione S-transferase 1-1 (209 aa).

Positions 1-81 (MADFYYLPGS…YLVEKYGKTD (81 aa)) constitute a GST N-terminal domain. Residues S10, 51–53 (HTI), and 65–67 (ESR) each bind glutathione. The region spanning 87-209 (CPKKRAVINQ…GCLEFKKYFE (123 aa)) is the GST C-terminal domain.

This sequence belongs to the GST superfamily. Theta family. In terms of assembly, homodimer.

The enzyme catalyses RX + glutathione = an S-substituted glutathione + a halide anion + H(+). It catalyses the reaction 1,1,1-trichloro-2,2-bis(4-chlorophenyl)ethane = 1,1-dichloro-2,2-bis(4-chlorophenyl)ethylene + chloride + H(+). Functionally, conjugation of reduced glutathione to a wide number of exogenous and endogenous hydrophobic electrophiles. Has DDT dehydrochlorinase activity. In Drosophila simulans (Fruit fly), this protein is Glutathione S-transferase 1-1 (GstD1).